The primary structure comprises 202 residues: Ribosome maturation factor RimP (202 aa).

This sequence belongs to the RimP family.

It is found in the cytoplasm. Functionally, required for maturation of 30S ribosomal subunits. The polypeptide is Ribosome maturation factor RimP (Paracidovorax citrulli (strain AAC00-1) (Acidovorax citrulli)).